Reading from the N-terminus, the 163-residue chain is Small ribosomal subunit protein bS18c (163 aa).

Disordered regions lie at residues 1 to 54 and 121 to 163; these read MYTS…PGDR and ITGP…SSDC. Positions 7–48 are enriched in basic residues; sequence PFHKSKQTFHKSKQTFRKSKQTFRKFKQPFRKPKQPFRRRPR. Residues 140–163 are compositionally biased toward low complexity; that stretch reads NSNRNLRNSNQTLRNNNRNLSSDC.

It belongs to the bacterial ribosomal protein bS18 family. Part of the 30S ribosomal subunit.

Its subcellular location is the plastid. It localises to the chloroplast. The sequence is that of Small ribosomal subunit protein bS18c from Oryza nivara (Indian wild rice).